We begin with the raw amino-acid sequence, 122 residues long: Urease subunit beta (122 aa).

The protein belongs to the urease beta subunit family. In terms of assembly, heterotrimer of UreA (gamma), UreB (beta) and UreC (alpha) subunits. Three heterotrimers associate to form the active enzyme.

It is found in the cytoplasm. The enzyme catalyses urea + 2 H2O + H(+) = hydrogencarbonate + 2 NH4(+). Its pathway is nitrogen metabolism; urea degradation; CO(2) and NH(3) from urea (urease route): step 1/1. This Acetivibrio thermocellus (strain ATCC 27405 / DSM 1237 / JCM 9322 / NBRC 103400 / NCIMB 10682 / NRRL B-4536 / VPI 7372) (Clostridium thermocellum) protein is Urease subunit beta.